The primary structure comprises 42 residues: Photosystem I reaction center subunit IX (42 aa).

The helical transmembrane segment at 7 to 27 (YLSTAPVLATLWFGFLAGLLI) threads the bilayer.

It belongs to the PsaJ family.

The protein resides in the plastid. It localises to the chloroplast thylakoid membrane. Its function is as follows. May help in the organization of the PsaE and PsaF subunits. This Anthoceros angustus (Hornwort) protein is Photosystem I reaction center subunit IX.